Reading from the N-terminus, the 121-residue chain is Autophagy-related protein 8 (121 aa).

Gly116 carries the Phosphatidylethanolamine amidated glycine lipid modification. Positions 117-121 (DFETA) are cleaved as a propeptide — removed in mature form.

The protein belongs to the ATG8 family. The C-terminal 5 residues are removed to expose Gly-116 at the C-terminus. The C-terminal Gly is then amidated with phosphatidylethanolamine by an activating system similar to that for ubiquitin.

The protein resides in the cytoplasmic vesicle. Its subcellular location is the autophagosome membrane. It localises to the vacuole membrane. In terms of biological role, ubiquitin-like modifier involved in autophagosome formation. With cpr-1/atg4, mediates the delivery of the autophagosomes to the vacuole via the microtubule cytoskeleton. Required for selective autophagic degradation of the nucleus (nucleophagy) as well as for mitophagy which contributes to regulate mitochondrial quantity and quality by eliminating the mitochondria to a basal level to fulfill cellular energy requirements and preventing excess ROS production. Also participates in membrane fusion events that take place in the early secretory pathway. Also involved in endoplasmic reticulum-specific autophagic process and is essential for the survival of cells subjected to severe ER stress. The apg-6/atg8-PE conjugate mediates tethering between adjacent membranes and stimulates membrane hemifusion, leading to expansion of the autophagosomal membrane during autophagy. The polypeptide is Autophagy-related protein 8 (apg-6) (Neurospora crassa (strain ATCC 24698 / 74-OR23-1A / CBS 708.71 / DSM 1257 / FGSC 987)).